We begin with the raw amino-acid sequence, 231 residues long: 5'-methylthioadenosine/S-adenosylhomocysteine nucleosidase (231 aa).

The active-site Proton acceptor is Glu12. Residues Gly78, Met153, and 174–175 (ME) contribute to the substrate site. Asp198 serves as the catalytic Proton donor.

The protein belongs to the PNP/UDP phosphorylase family. MtnN subfamily.

It carries out the reaction S-adenosyl-L-homocysteine + H2O = S-(5-deoxy-D-ribos-5-yl)-L-homocysteine + adenine. It catalyses the reaction S-methyl-5'-thioadenosine + H2O = 5-(methylsulfanyl)-D-ribose + adenine. The enzyme catalyses 5'-deoxyadenosine + H2O = 5-deoxy-D-ribose + adenine. It participates in amino-acid biosynthesis; L-methionine biosynthesis via salvage pathway; S-methyl-5-thio-alpha-D-ribose 1-phosphate from S-methyl-5'-thioadenosine (hydrolase route): step 1/2. Catalyzes the irreversible cleavage of the glycosidic bond in both 5'-methylthioadenosine (MTA) and S-adenosylhomocysteine (SAH/AdoHcy) to adenine and the corresponding thioribose, 5'-methylthioribose and S-ribosylhomocysteine, respectively. Also cleaves 5'-deoxyadenosine, a toxic by-product of radical S-adenosylmethionine (SAM) enzymes, into 5-deoxyribose and adenine. The polypeptide is 5'-methylthioadenosine/S-adenosylhomocysteine nucleosidase (Bacillus cereus (strain B4264)).